A 213-amino-acid chain; its full sequence is Achelase-1 (213 aa).

Residues 1–213 (IVGGSVTTIG…RYTSWIQSNA (213 aa)) form the Peptidase S1 domain. A disulfide bridge connects residues C26 and C42. Residues H41 and D86 each act as charge relay system in the active site. The cysteines at positions 155 and 172 are disulfide-linked. The active-site Charge relay system is the S188.

Belongs to the peptidase S1 family. Hemolymph and saliva of the larval form (caterpillar).

The protein localises to the secreted. Its subcellular location is the extracellular space. Its activity is regulated as follows. Sensitive to serine proteinase inhibitors and thiol proteinase inhibitors. Its function is as follows. Fibrinolytic activity; shows preferential cleavage of Arg-Gly bonds in all three fibrinogen chains. Contact with the caterpillars causes severe bleeding, due the anticoagulant effect of the protein. The polypeptide is Achelase-1 (Lonomia achelous (Giant silkworm moth)).